Reading from the N-terminus, the 487-residue chain is UDP-N-acetylmuramate--L-alanine ligase (487 aa).

124–130 (GTHGKTT) serves as a coordination point for ATP.

This sequence belongs to the MurCDEF family.

The protein resides in the cytoplasm. The enzyme catalyses UDP-N-acetyl-alpha-D-muramate + L-alanine + ATP = UDP-N-acetyl-alpha-D-muramoyl-L-alanine + ADP + phosphate + H(+). It functions in the pathway cell wall biogenesis; peptidoglycan biosynthesis. Functionally, cell wall formation. The protein is UDP-N-acetylmuramate--L-alanine ligase of Acaryochloris marina (strain MBIC 11017).